Consider the following 83-residue polypeptide: MERYYHLCKNHQGKVVRITERGGRVHVGRITRVTRDRVFIAPVGGGPRGFGYGYWGGYWGYGAAYGISLGLIAGVALAGLFFW.

Residues 58 to 80 form a helical membrane-spanning segment; the sequence is YWGYGAAYGISLGLIAGVALAGL.

The protein resides in the membrane. This is an uncharacterized protein from Bacillus subtilis (strain 168).